A 605-amino-acid polypeptide reads, in one-letter code: Elongation factor 4 (605 aa).

The tr-type G domain maps to 9 to 192; that stretch reads SRIRNFCIIA…AIIARVPAPA (184 aa). GTP is bound by residues 21 to 26 and 139 to 142; these read DHGKST and NKID.

Belongs to the TRAFAC class translation factor GTPase superfamily. Classic translation factor GTPase family. LepA subfamily.

The protein localises to the cell inner membrane. The catalysed reaction is GTP + H2O = GDP + phosphate + H(+). Required for accurate and efficient protein synthesis under certain stress conditions. May act as a fidelity factor of the translation reaction, by catalyzing a one-codon backward translocation of tRNAs on improperly translocated ribosomes. Back-translocation proceeds from a post-translocation (POST) complex to a pre-translocation (PRE) complex, thus giving elongation factor G a second chance to translocate the tRNAs correctly. Binds to ribosomes in a GTP-dependent manner. In Chlorobium luteolum (strain DSM 273 / BCRC 81028 / 2530) (Pelodictyon luteolum), this protein is Elongation factor 4.